The sequence spans 281 residues: Survival motor neuron protein 1 (281 aa).

Disordered stretches follow at residues 1–20 (MANG…SDDS) and 42–77 (ALKG…NAAP). A Phosphothreonine modification is found at T14. S17 and S20 each carry phosphoserine. The segment covering 59–73 (KKRKNNKKNKSRKRC) has biased composition (basic residues). One can recognise a Tudor domain in the interval 80–140 (EWQVGDSCYA…LTEPPDMDED (61 aa)). Basic and acidic residues predominate over residues 145 to 159 (ANVKETESSTEESDR). Residues 145–242 (ANVKETESST…PMSPDFGEDD (98 aa)) form a disordered region. 2 stretches are compositionally biased toward pro residues: residues 179 to 197 (MGPP…PPPP) and 212 to 235 (PSFP…PPMS). Residues 225 to 252 (PPMIPPPPPMSPDFGEDDEALGSMLISW) form a P2 (binding site for SNRPB) region. The interval 264 to 279 (GLRQGRKEAAASKKSH) is required for interaction with SYNCRIP.

The protein belongs to the SMN family. Homodimer. Component of an import snRNP complex composed of kpnb1, rnut1, smn1 and znf259. Part of the core SMN complex that contains smn1, gemin2/sip1, ddx20/gemin3, gemin4, gemin5, gemin6, gemin7, gemin8 and strap/unrip. Interacts with ddx20, fbl, nola1, rnut1, syncrip and with several spliceosomal snRNP core Sm proteins, including snrpb, snrpd1, snrpd2, snrpd3, snrpe and ilf3. Interacts with elavl4.

It is found in the nucleus. The protein localises to the gem. The protein resides in the cajal body. Its subcellular location is the cytoplasm. It localises to the cytoplasmic granule. It is found in the perikaryon. The protein localises to the cell projection. The protein resides in the neuron projection. Its subcellular location is the myofibril. It localises to the sarcomere. It is found in the z line. In terms of biological role, the SMN complex plays an essential role in spliceosomal snRNP assembly in the cytoplasm and is required for pre-mRNA splicing in the nucleus. It may also play a role in the metabolism of snoRNPs. Required in motor neurons and proprioceptive neurons to ensure correct U12 intron splicing and proper levels of tmem41b mRNA. Required for the maturation of motor neuron axonal branches and dendrites. The protein is Survival motor neuron protein 1 (smn1) of Danio rerio (Zebrafish).